A 520-amino-acid polypeptide reads, in one-letter code: Hydroxymethylglutaryl-CoA synthase, cytoplasmic (520 aa).

Serine 4 carries the post-translational modification Phosphoserine. Aspartate 43 and alanine 44 together coordinate (3S)-3-hydroxy-3-methylglutaryl-CoA. 44 to 46 (AGK) is a CoA binding site. Lysine 46 is subject to N6-acetyllysine. Catalysis depends on glutamate 95, which acts as the Proton donor/acceptor. Positions 129, 167, 171, 221, and 264 each coordinate (3S)-3-hydroxy-3-methylglutaryl-CoA. Residue cysteine 129 is the Acyl-thioester intermediate of the active site. Asparagine 167 provides a ligand contact to CoA. Serine 221 provides a ligand contact to CoA. Histidine 264 acts as the Proton donor/acceptor in catalysis. Positions 269 and 273 each coordinate CoA. Lysine 273, asparagine 343, and serine 377 together coordinate (3S)-3-hydroxy-3-methylglutaryl-CoA. Lysine 273 is subject to N6-acetyllysine. The segment at 486-520 (SNTATEHIPSPAKKVPRLPATAAESESAVISNGEH) is disordered. Phosphoserine occurs at positions 495 and 516.

Belongs to the thiolase-like superfamily. HMG-CoA synthase family. As to quaternary structure, homodimer.

It localises to the cytoplasm. The catalysed reaction is acetoacetyl-CoA + acetyl-CoA + H2O = (3S)-3-hydroxy-3-methylglutaryl-CoA + CoA + H(+). The protein operates within metabolic intermediate biosynthesis; (R)-mevalonate biosynthesis; (R)-mevalonate from acetyl-CoA: step 2/3. This enzyme condenses acetyl-CoA with acetoacetyl-CoA to form HMG-CoA, which is converted by HMG-CoA reductase (HMGCR) into mevalonate, a precursor for cholesterol synthesis. This chain is Hydroxymethylglutaryl-CoA synthase, cytoplasmic, found in Cricetulus griseus (Chinese hamster).